The primary structure comprises 95 residues: Large ribosomal subunit protein uL23 (95 aa).

Belongs to the universal ribosomal protein uL23 family. As to quaternary structure, part of the 50S ribosomal subunit. Contacts protein L29, and trigger factor when it is bound to the ribosome.

Functionally, one of the early assembly proteins it binds 23S rRNA. One of the proteins that surrounds the polypeptide exit tunnel on the outside of the ribosome. Forms the main docking site for trigger factor binding to the ribosome. This Bacillus subtilis (strain 168) protein is Large ribosomal subunit protein uL23.